A 277-amino-acid polypeptide reads, in one-letter code: Urease accessory protein UreD (277 aa).

It belongs to the UreD family. As to quaternary structure, ureD, UreF and UreG form a complex that acts as a GTP-hydrolysis-dependent molecular chaperone, activating the urease apoprotein by helping to assemble the nickel containing metallocenter of UreC. The UreE protein probably delivers the nickel.

It localises to the cytoplasm. Required for maturation of urease via the functional incorporation of the urease nickel metallocenter. The sequence is that of Urease accessory protein UreD from Pseudomonas putida (strain W619).